A 297-amino-acid polypeptide reads, in one-letter code: MEDYTKIEKIGEGTYGVVYKGRHKTTGQVVAMKKIRLESEEEGVPSTAIREISLLKELRHPNIVSLQDVLMQDSRLYLIFEFLSMDLKKYLDSIPPGQFMDSSLVKSYLYQILQGIVFCHSRRVLHRDLKPQNLLIDDKGTIKLADFGLARAFGIPIRVYTHEVVTLWYRSPEVLLGSARYSTPVDIWSIGTIFAELATKKPLFHGDSEIDQLFRIFRALGTPNNEVWPEVESLQDYKSTFPKWKPGSLASHVKNLDENGLDLLSKMLIYDPAKRISGKMALNHPYFNDLDSQIKKM.

Met1 carries the post-translational modification N-acetylmethionine. Tyr4 is subject to Phosphotyrosine; by PKR. The 284-residue stretch at 4 to 287 folds into the Protein kinase domain; the sequence is YTKIEKIGEG…GKMALNHPYF (284 aa). Lys6 and Lys9 each carry N6-acetyllysine; alternate. Residues Lys6 and Lys9 each participate in a glycyl lysine isopeptide (Lys-Gly) (interchain with G-Cter in SUMO2); alternate cross-link. Residue 10-18 coordinates ATP; the sequence is IGEGTYGVV. Thr14 is subject to Phosphothreonine; by PKMYT1. Phosphotyrosine; by PKMYT1, WEE1 and WEE2 is present on Tyr15. A Phosphotyrosine; by WEE1 and WEE2 modification is found at Tyr15. Tyr19 carries the post-translational modification Phosphotyrosine. Lys20 participates in a covalent cross-link: Glycyl lysine isopeptide (Lys-Gly) (interchain with G-Cter in SUMO2). ATP is bound at residue Lys33. Position 39 is a phosphoserine (Ser39). Tyr77 carries the phosphotyrosine modification. Residue Asp128 is the Proton acceptor of the active site. A Glycyl lysine isopeptide (Lys-Gly) (interchain with G-Cter in SUMO2) cross-link involves residue Lys139. Phosphothreonine is present on Thr141. The residue at position 161 (Thr161) is a Phosphothreonine; by CAK. Position 178 is a phosphoserine (Ser178). The residue at position 222 (Thr222) is a Phosphothreonine. Lys245 is subject to N6-succinyllysine. Position 248 is a phosphoserine (Ser248).

It belongs to the protein kinase superfamily. CMGC Ser/Thr protein kinase family. CDC2/CDKX subfamily. As to quaternary structure, forms a stable but non-covalent complex with a regulatory subunit and with a cyclin. Interacts with cyclins-B (CCNB1, CCNB2 and CCNB3) to form a serine/threonine kinase holoenzyme complex also known as maturation promoting factor (MPF). The cyclin subunit imparts substrate specificity to the complex. Can also form CDK1-cylin-D and CDK1-cyclin-E complexes that phosphorylate RB1 in vitro. Binds to RB1 and other transcription factors such as FOXO1 and RUNX2. Promotes G2-M transition when in complex with a cyclin-B. Interacts with DLGAP5. Binds to the CDK inhibitors CDKN1A/p21 and CDKN1B/p27. Isoform 2 is unable to complex with cyclin-B1 and also fails to bind to CDKN1A/p21. Interacts with catalytically active CCNB1 and RALBP1 during mitosis to form an endocytotic complex during interphase. Associates with cyclins-A and B1 during S-phase in regenerating hepatocytes. Interacts with FANCC. Interacts with CEP63; this interaction recruits CDK1 to centrosomes. Interacts with CENPA. Interacts with NR1D1. Phosphorylation at Thr-161 by CAK/CDK7 activates kinase activity. Phosphorylation at Thr-14 and Tyr-15 by PKMYT1 prevents nuclear translocation. Phosphorylation at Tyr-15 by WEE1 and WEE2 inhibits the protein kinase activity and acts as a negative regulator of entry into mitosis (G2 to M transition). Phosphorylation by PKMYT1 and WEE1 takes place during mitosis to keep CDK1-cyclin-B complexes inactive until the end of G2. By the end of G2, PKMYT1 and WEE1 are inactivated, but CDC25A and CDC25B are activated. Dephosphorylation by active CDC25A and CDC25B at Thr-14 and Tyr-15, leads to CDK1 activation at the G2-M transition. Phosphorylation at Tyr-15 by WEE2 during oogenesis is required to maintain meiotic arrest in oocytes during the germinal vesicle (GV) stage, a long period of quiescence at dictyate prophase I, leading to prevent meiotic reentry. Phosphorylation by WEE2 is also required for metaphase II exit during egg activation to ensure exit from meiosis in oocytes and promote pronuclear formation. Phosphorylated at Tyr-4 by PKR/EIF2AK2 upon genotoxic stress. This phosphorylation triggers CDK1 polyubiquitination and subsequent proteolysis, thus leading to G2 arrest. In terms of processing, polyubiquitinated upon genotoxic stress.

It localises to the nucleus. The protein localises to the cytoplasm. Its subcellular location is the mitochondrion. The protein resides in the cytoskeleton. It is found in the microtubule organizing center. It localises to the centrosome. The protein localises to the spindle. The catalysed reaction is L-seryl-[protein] + ATP = O-phospho-L-seryl-[protein] + ADP + H(+). The enzyme catalyses L-threonyl-[protein] + ATP = O-phospho-L-threonyl-[protein] + ADP + H(+). It carries out the reaction [DNA-directed RNA polymerase] + ATP = phospho-[DNA-directed RNA polymerase] + ADP + H(+). Phosphorylation at Thr-14 or Tyr-15 inactivates the enzyme, while phosphorylation at Thr-161 activates it. Activated through a multistep process; binding to cyclin-B is required for relocation of cyclin-kinase complexes to the nucleus, activated by CAK/CDK7-mediated phosphorylation on Thr-161, and CDC25-mediated dephosphorylation of inhibitory phosphorylation on Thr-14 and Tyr-15. Activity is restricted during S-phase in an ATR-dependent manner to prevent premature entry into G2. Repressed by the CDK inhibitors CDKN1A/p21 and CDKN1B/p27 during the G1 phase and by CDKN1A/p21 at the G1-S checkpoint upon DNA damage. Transient activation by rapid and transient dephosphorylation at Tyr-15 triggered by TGFB1. Plays a key role in the control of the eukaryotic cell cycle by modulating the centrosome cycle as well as mitotic onset; promotes G2-M transition via association with multiple interphase cyclins. Phosphorylates PARVA/actopaxin, APC, AMPH, APC, BARD1, Bcl-xL/BCL2L1, BRCA2, CALD1, CASP8, CDC7, CDC20, CDC25A, CDC25C, CC2D1A, CENPA, CSNK2 proteins/CKII, FZR1/CDH1, CDK7, CEBPB, CHAMP1, DMD/dystrophin, EEF1 proteins/EF-1, EZH2, KIF11/EG5, EGFR, FANCG, FOS, GFAP, GOLGA2/GM130, GRASP1, UBE2A/hHR6A, HIST1H1 proteins/histone H1, HMGA1, HIVEP3/KRC, KAT5, LMNA, LMNB, LBR, LATS1, MAP1B, MAP4, MARCKS, MCM2, MCM4, MKLP1, MLST8, MYB, NEFH, NFIC, NPC/nuclear pore complex, PITPNM1/NIR2, NPM1, NCL, NUCKS1, NPM1/numatrin, ORC1, PRKAR2A, EEF1E1/p18, EIF3F/p47, p53/TP53, NONO/p54NRB, PAPOLA, PLEC/plectin, RB1, TPPP, UL40/R2, RAB4A, RAP1GAP, RBBP8/CtIP, RCC1, RPS6KB1/S6K1, KHDRBS1/SAM68, ESPL1, SKI, BIRC5/survivin, STIP1, TEX14, beta-tubulins, MAPT/TAU, NEDD1, VIM/vimentin, TK1, FOXO1, RUNX1/AML1, SAMHD1, SIRT2, CGAS and RUNX2. CDK1/CDC2-cyclin-B controls pronuclear union in interphase fertilized eggs. Essential for early stages of embryonic development. During G2 and early mitosis, CDC25A/B/C-mediated dephosphorylation activates CDK1/cyclin complexes which phosphorylate several substrates that trigger at least centrosome separation, Golgi dynamics, nuclear envelope breakdown and chromosome condensation. Once chromosomes are condensed and aligned at the metaphase plate, CDK1 activity is switched off by WEE1- and PKMYT1-mediated phosphorylation to allow sister chromatid separation, chromosome decondensation, reformation of the nuclear envelope and cytokinesis. Phosphorylates KRT5 during prometaphase and metaphase. Inactivated by PKR/EIF2AK2- and WEE1-mediated phosphorylation upon DNA damage to stop cell cycle and genome replication at the G2 checkpoint thus facilitating DNA repair. Reactivated after successful DNA repair through WIP1-dependent signaling leading to CDC25A/B/C-mediated dephosphorylation and restoring cell cycle progression. Catalyzes lamin (LMNA, LMNB1 and LMNB2) phosphorylation at the onset of mitosis, promoting nuclear envelope breakdown. In proliferating cells, CDK1-mediated FOXO1 phosphorylation at the G2-M phase represses FOXO1 interaction with 14-3-3 proteins and thereby promotes FOXO1 nuclear accumulation and transcription factor activity, leading to cell death of postmitotic neurons. The phosphorylation of beta-tubulins regulates microtubule dynamics during mitosis. NEDD1 phosphorylation promotes PLK1-mediated NEDD1 phosphorylation and subsequent targeting of the gamma-tubulin ring complex (gTuRC) to the centrosome, an important step for spindle formation. In addition, CC2D1A phosphorylation regulates CC2D1A spindle pole localization and association with SCC1/RAD21 and centriole cohesion during mitosis. The phosphorylation of Bcl-xL/BCL2L1 after prolongated G2 arrest upon DNA damage triggers apoptosis. In contrast, CASP8 phosphorylation during mitosis prevents its activation by proteolysis and subsequent apoptosis. This phosphorylation occurs in cancer cell lines, as well as in primary breast tissues and lymphocytes. EZH2 phosphorylation promotes H3K27me3 maintenance and epigenetic gene silencing. CALD1 phosphorylation promotes Schwann cell migration during peripheral nerve regeneration. CDK1-cyclin-B complex phosphorylates NCKAP5L and mediates its dissociation from centrosomes during mitosis. Regulates the amplitude of the cyclic expression of the core clock gene BMAL1 by phosphorylating its transcriptional repressor NR1D1, and this phosphorylation is necessary for SCF(FBXW7)-mediated ubiquitination and proteasomal degradation of NR1D1. Phosphorylates EML3 at 'Thr-881' which is essential for its interaction with HAUS augmin-like complex and TUBG1. Phosphorylates CGAS during mitosis, leading to its inhibition, thereby preventing CGAS activation by self DNA during mitosis. Phosphorylates SKA3 during mitosis which promotes SKA3 binding to the NDC80 complex and anchoring of the SKA complex to kinetochores, to enable stable attachment of mitotic spindle microtubules to kinetochores. In Bos taurus (Bovine), this protein is Cyclin-dependent kinase 1 (CDK1).